The following is a 745-amino-acid chain: DNA ligase (745 aa).

The segment at 1–27 is disordered; the sequence is MRNHGPGSERKDACVSAPDPTFSDDVP. NAD(+)-binding positions include 57-61, 106-107, and Glu135; these read DAEYD and SL. Lys137 acts as the N6-AMP-lysine intermediate in catalysis. NAD(+) contacts are provided by Arg158 and Glu197. The interval 216-235 is disordered; sequence GKPPFANPRNAAAGSLRQKD. Residues Lys313 and Lys337 each contribute to the NAD(+) site. Positions 431, 434, 450, and 456 each coordinate Zn(2+). Residues 649–738 form the BRCT domain; sequence DGPRLLDGIT…PEAARAARLS (90 aa).

Belongs to the NAD-dependent DNA ligase family. LigA subfamily. Requires Mg(2+) as cofactor. It depends on Mn(2+) as a cofactor.

The enzyme catalyses NAD(+) + (deoxyribonucleotide)n-3'-hydroxyl + 5'-phospho-(deoxyribonucleotide)m = (deoxyribonucleotide)n+m + AMP + beta-nicotinamide D-nucleotide.. DNA ligase that catalyzes the formation of phosphodiester linkages between 5'-phosphoryl and 3'-hydroxyl groups in double-stranded DNA using NAD as a coenzyme and as the energy source for the reaction. It is essential for DNA replication and repair of damaged DNA. The sequence is that of DNA ligase from Thermobifida fusca (strain YX).